Reading from the N-terminus, the 789-residue chain is Spermatogenesis-associated protein 20 (789 aa).

Residues 1-19 (MSHHSPPPPKHKGEHKGHG) show a composition bias toward basic residues. Residues 1–65 (MSHHSPPPPK…CPPPAPQKTA (65 aa)) are disordered. A phosphoserine mark is found at Ser-5 and Ser-652.

In terms of tissue distribution, testis-specific and age-dependent (at protein level). Highly expressed. Expressed in round spermatids located in the inner half-layer of the seminiferous epithelium as well as in early elongated spermatids having cytoplasmic protrusions into the tubular lumen.

It is found in the secreted. In terms of biological role, may play a role in fertility regulation. In Rattus norvegicus (Rat), this protein is Spermatogenesis-associated protein 20 (Spata20).